Reading from the N-terminus, the 50-residue chain is Light-harvesting protein B-870 beta chain (50 aa).

Over 2–22 (ADNTDLSFTGLTDEQAQELHS) the chain is Cytoplasmic. A bacteriochlorophyll is bound by residues H21 and H39. Residues 23–45 (VYMSGLFLFAAVAVVAHLATYIW) traverse the membrane as a helical segment. Residues 46-50 (RPWFG) lie on the Periplasmic side of the membrane.

It belongs to the antenna complex beta subunit family. As to quaternary structure, the core complex is formed by different alpha and beta chains, binding bacteriochlorophyll molecules, and arranged most probably in tetrameric structures disposed around the reaction center. The non-pigmented gamma chains may constitute additional components.

The protein localises to the cell inner membrane. Antenna complexes are light-harvesting systems, which transfer the excitation energy to the reaction centers. The chain is Light-harvesting protein B-870 beta chain (pufB) from Roseobacter denitrificans (strain ATCC 33942 / OCh 114) (Erythrobacter sp. (strain OCh 114)).